Reading from the N-terminus, the 541-residue chain is Arginine--tRNA ligase (541 aa).

The short motif at 119–129 is the 'HIGH' region element; it reads ANPTGPLHIGH.

This sequence belongs to the class-I aminoacyl-tRNA synthetase family. As to quaternary structure, monomer.

The protein resides in the cytoplasm. It carries out the reaction tRNA(Arg) + L-arginine + ATP = L-arginyl-tRNA(Arg) + AMP + diphosphate. This is Arginine--tRNA ligase from Helicobacter pylori (strain HPAG1).